The chain runs to 187 residues: Fibroblast growth factor 4A (187 aa).

An N-terminal signal peptide occupies residues 1 to 22 (MTVPSALVPILLLGTAAVMVQC).

It belongs to the heparin-binding growth factors family.

Its subcellular location is the secreted. Functionally, plays an important role in the regulation of embryonic development, cell proliferation, and cell differentiation. Good candidate for an inducing factor with possible roles both in mesoderm induction at the blastula stage and in the formation of the anteroposterior axis at the gastrula stage. This chain is Fibroblast growth factor 4A (fgf4-a), found in Xenopus laevis (African clawed frog).